The primary structure comprises 333 residues: Ketol-acid reductoisomerase (NADP(+)) (333 aa).

The KARI N-terminal Rossmann domain maps to 1 to 179; sequence MFYDDDADLT…GGTRAGVIKT (179 aa). NADP(+) is bound by residues 22–25, Lys45, Ser48, Ser50, and 80–83; these read YGSQ and DTAQ. Residue His105 is part of the active site. Gly131 contributes to the NADP(+) binding site. One can recognise a KARI C-terminal knotted domain in the interval 180–325; the sequence is TFKDETETDL…KRLRDLMSWV (146 aa). Residues Asp188, Glu192, Glu224, and Glu228 each contribute to the Mg(2+) site. Ser249 is a substrate binding site.

The protein belongs to the ketol-acid reductoisomerase family. Mg(2+) serves as cofactor.

The catalysed reaction is (2R)-2,3-dihydroxy-3-methylbutanoate + NADP(+) = (2S)-2-acetolactate + NADPH + H(+). It catalyses the reaction (2R,3R)-2,3-dihydroxy-3-methylpentanoate + NADP(+) = (S)-2-ethyl-2-hydroxy-3-oxobutanoate + NADPH + H(+). Its pathway is amino-acid biosynthesis; L-isoleucine biosynthesis; L-isoleucine from 2-oxobutanoate: step 2/4. It participates in amino-acid biosynthesis; L-valine biosynthesis; L-valine from pyruvate: step 2/4. Its function is as follows. Involved in the biosynthesis of branched-chain amino acids (BCAA). Catalyzes an alkyl-migration followed by a ketol-acid reduction of (S)-2-acetolactate (S2AL) to yield (R)-2,3-dihydroxy-isovalerate. In the isomerase reaction, S2AL is rearranged via a Mg-dependent methyl migration to produce 3-hydroxy-3-methyl-2-ketobutyrate (HMKB). In the reductase reaction, this 2-ketoacid undergoes a metal-dependent reduction by NADPH to yield (R)-2,3-dihydroxy-isovalerate. The chain is Ketol-acid reductoisomerase (NADP(+)) from Mycobacterium avium.